The following is a 288-amino-acid chain: Proteasome subunit beta (288 aa).

A propeptide spans 1–57 (MTVDGQVGRWPVSAIPAAYMRPGSGSFTEFLAGAEPHLLPGRAGAQPAGAAPAVPHG) (removed in mature form; by autocatalysis). T58 acts as the Nucleophile in catalysis.

This sequence belongs to the peptidase T1B family. The 20S proteasome core is composed of 14 alpha and 14 beta subunits that assemble into four stacked heptameric rings, resulting in a barrel-shaped structure. The two inner rings, each composed of seven catalytic beta subunits, are sandwiched by two outer rings, each composed of seven alpha subunits. The catalytic chamber with the active sites is on the inside of the barrel. Has a gated structure, the ends of the cylinder being occluded by the N-termini of the alpha-subunits. Is capped by the proteasome-associated ATPase, ARC.

The protein resides in the cytoplasm. It catalyses the reaction Cleavage of peptide bonds with very broad specificity.. Its pathway is protein degradation; proteasomal Pup-dependent pathway. Its activity is regulated as follows. The formation of the proteasomal ATPase ARC-20S proteasome complex, likely via the docking of the C-termini of ARC into the intersubunit pockets in the alpha-rings, may trigger opening of the gate for substrate entry. Interconversion between the open-gate and close-gate conformations leads to a dynamic regulation of the 20S proteasome proteolysis activity. In terms of biological role, component of the proteasome core, a large protease complex with broad specificity involved in protein degradation. The sequence is that of Proteasome subunit beta from Nakamurella multipartita (strain ATCC 700099 / DSM 44233 / CIP 104796 / JCM 9543 / NBRC 105858 / Y-104) (Microsphaera multipartita).